The sequence spans 246 residues: E3 ubiquitin-protein ligase MARCHF2 (246 aa).

The RING-CH-type zinc finger occupies 56-116 (GTQSDGPICR…ELCHTEFAVE (61 aa)). Zn(2+) is bound by residues cysteine 64, cysteine 67, cysteine 80, cysteine 82, histidine 90, cysteine 93, cysteine 106, and cysteine 109. Transmembrane regions (helical) follow at residues 138 to 158 (LFCDMVCFLFITPLAAISGWL) and 175 to 195 (AVGLIALTIALFTIYVLWTLV).

It is found in the endoplasmic reticulum membrane. The protein resides in the lysosome membrane. Its subcellular location is the endosome membrane. It carries out the reaction S-ubiquitinyl-[E2 ubiquitin-conjugating enzyme]-L-cysteine + [acceptor protein]-L-lysine = [E2 ubiquitin-conjugating enzyme]-L-cysteine + N(6)-ubiquitinyl-[acceptor protein]-L-lysine.. It participates in protein modification; protein ubiquitination. Its function is as follows. E3 ubiquitin-protein ligase which may be involved in endosomal trafficking. E3 ubiquitin ligases accept ubiquitin from an E2 ubiquitin-conjugating enzyme in the form of a thioester and then directly transfer the ubiquitin to targeted substrates. The sequence is that of E3 ubiquitin-protein ligase MARCHF2 (marchf2) from Xenopus laevis (African clawed frog).